Consider the following 282-residue polypeptide: Thiazole synthase (282 aa).

K113 functions as the Schiff-base intermediate with DXP in the catalytic mechanism. 1-deoxy-D-xylulose 5-phosphate contacts are provided by residues G174, 201–202 (AG), and 223–224 (NT).

The protein belongs to the ThiG family. As to quaternary structure, homotetramer. Forms heterodimers with either ThiH or ThiS.

It localises to the cytoplasm. The enzyme catalyses [ThiS sulfur-carrier protein]-C-terminal-Gly-aminoethanethioate + 2-iminoacetate + 1-deoxy-D-xylulose 5-phosphate = [ThiS sulfur-carrier protein]-C-terminal Gly-Gly + 2-[(2R,5Z)-2-carboxy-4-methylthiazol-5(2H)-ylidene]ethyl phosphate + 2 H2O + H(+). The protein operates within cofactor biosynthesis; thiamine diphosphate biosynthesis. Its function is as follows. Catalyzes the rearrangement of 1-deoxy-D-xylulose 5-phosphate (DXP) to produce the thiazole phosphate moiety of thiamine. Sulfur is provided by the thiocarboxylate moiety of the carrier protein ThiS. In vitro, sulfur can be provided by H(2)S. The chain is Thiazole synthase from Cupriavidus metallidurans (strain ATCC 43123 / DSM 2839 / NBRC 102507 / CH34) (Ralstonia metallidurans).